A 368-amino-acid polypeptide reads, in one-letter code: Epoxyqueuosine reductase QueH (368 aa).

Residues Cys-6, Cys-7, Cys-87, and Cys-90 each contribute to the [4Fe-4S] cluster site. Cys-174 and Cys-176 are joined by a disulfide.

This sequence belongs to the QueH family.

The catalysed reaction is epoxyqueuosine(34) in tRNA + AH2 = queuosine(34) in tRNA + A + H2O. It functions in the pathway tRNA modification; tRNA-queuosine biosynthesis. Catalyzes the conversion of epoxyqueuosine (oQ) to queuosine (Q), which is a hypermodified base found in the wobble positions of tRNA(Asp), tRNA(Asn), tRNA(His) and tRNA(Tyr). This chain is Epoxyqueuosine reductase QueH, found in Helicobacter pylori (strain ATCC 700392 / 26695) (Campylobacter pylori).